The sequence spans 56 residues: Protein YqiD (56 aa).

A helical transmembrane segment spans residues phenylalanine 2–leucine 22.

It localises to the cell inner membrane. The chain is Protein YqiD from Escherichia coli (strain K12).